Consider the following 518-residue polypeptide: Glutamate--cysteine ligase (518 aa).

Belongs to the glutamate--cysteine ligase type 1 family. Type 1 subfamily.

It catalyses the reaction L-cysteine + L-glutamate + ATP = gamma-L-glutamyl-L-cysteine + ADP + phosphate + H(+). Its pathway is sulfur metabolism; glutathione biosynthesis; glutathione from L-cysteine and L-glutamate: step 1/2. In Escherichia fergusonii (strain ATCC 35469 / DSM 13698 / CCUG 18766 / IAM 14443 / JCM 21226 / LMG 7866 / NBRC 102419 / NCTC 12128 / CDC 0568-73), this protein is Glutamate--cysteine ligase.